A 181-amino-acid chain; its full sequence is Nucleoside diphosphate kinase, mitochondrial (181 aa).

Residues 1 to 10 show a composition bias toward basic residues; the sequence is MFRGGTHRLR. Residues 1–22 form a disordered region; sequence MFRGGTHRLRGQPGLSLPHGPR. The transit peptide at 1–24 directs the protein to the mitochondrion; sequence MFRGGTHRLRGQPGLSLPHGPRCY. ATP-binding residues include K40, F88, R116, T122, R133, and N143. The Pros-phosphohistidine intermediate role is filled by H146.

Belongs to the NDK family. It depends on Mg(2+) as a cofactor. In terms of tissue distribution, highest levels in the liver and kidney with lower levels in the heart, brain and breast muscle.

The protein localises to the mitochondrion intermembrane space. The protein resides in the mitochondrion matrix. It carries out the reaction a 2'-deoxyribonucleoside 5'-diphosphate + ATP = a 2'-deoxyribonucleoside 5'-triphosphate + ADP. The catalysed reaction is a ribonucleoside 5'-diphosphate + ATP = a ribonucleoside 5'-triphosphate + ADP. With respect to regulation, feedback inhibition by ADP. In terms of biological role, major role in the synthesis of nucleoside triphosphates other than ATP. The ATP gamma phosphate is transferred to the NDP beta phosphate via a ping-pong mechanism, using a phosphorylated active-site intermediate. Through the catalyzed exchange of gamma-phosphate between di- and triphosphonucleosides participates in regulation of intracellular nucleotide homeostasis. Binds to anionic phospholipids, predominantly to cardiolipin; the binding inhibits its phosphotransfer activity. Acts as a mitochondria-specific NDK coupled to respiration. Promotes the redistribution of cardiolipin between the mitochondrial inner membrane and outer membrane which is implicated in pro-apoptotic signaling. The sequence is that of Nucleoside diphosphate kinase, mitochondrial (NME4) from Columba livia (Rock dove).